A 126-amino-acid polypeptide reads, in one-letter code: Large ribosomal subunit protein eL32 (126 aa).

The protein belongs to the eukaryotic ribosomal protein eL32 family. In terms of assembly, part of the 50S ribosomal subunit.

The chain is Large ribosomal subunit protein eL32 (rpl32e) from Thermococcus kodakarensis (strain ATCC BAA-918 / JCM 12380 / KOD1) (Pyrococcus kodakaraensis (strain KOD1)).